We begin with the raw amino-acid sequence, 374 residues long: Zinc finger CCCH domain-containing protein 15 homolog (374 aa).

2 consecutive C3H1-type zinc fingers follow at residues 89–116 (DPKSLLCVFFKQGLCGKGAKCKFSHDLA) and 167–197 (YFLEAVENNKYGWFWECPNGGDKCQYRHCLP).

The protein belongs to the ZC3H15/TMA46 family.

The polypeptide is Zinc finger CCCH domain-containing protein 15 homolog (Caenorhabditis briggsae).